A 417-amino-acid chain; its full sequence is Gamma-glutamyl phosphate reductase (417 aa).

The protein belongs to the gamma-glutamyl phosphate reductase family.

The protein localises to the cytoplasm. The enzyme catalyses L-glutamate 5-semialdehyde + phosphate + NADP(+) = L-glutamyl 5-phosphate + NADPH + H(+). The protein operates within amino-acid biosynthesis; L-proline biosynthesis; L-glutamate 5-semialdehyde from L-glutamate: step 2/2. In terms of biological role, catalyzes the NADPH-dependent reduction of L-glutamate 5-phosphate into L-glutamate 5-semialdehyde and phosphate. The product spontaneously undergoes cyclization to form 1-pyrroline-5-carboxylate. The chain is Gamma-glutamyl phosphate reductase from Proteus mirabilis (strain HI4320).